The chain runs to 554 residues: Glucose-6-phosphate isomerase 1 (554 aa).

Glu-359 functions as the Proton donor in the catalytic mechanism. Residues His-390 and Lys-518 contribute to the active site.

It belongs to the GPI family.

Its subcellular location is the cytoplasm. The catalysed reaction is alpha-D-glucose 6-phosphate = beta-D-fructose 6-phosphate. It participates in carbohydrate biosynthesis; gluconeogenesis. Its pathway is carbohydrate degradation; glycolysis; D-glyceraldehyde 3-phosphate and glycerone phosphate from D-glucose: step 2/4. Catalyzes the reversible isomerization of glucose-6-phosphate to fructose-6-phosphate. The protein is Glucose-6-phosphate isomerase 1 of Pseudomonas putida (strain ATCC 47054 / DSM 6125 / CFBP 8728 / NCIMB 11950 / KT2440).